The following is a 356-amino-acid chain: 3-isopropylmalate dehydrogenase (356 aa).

Substrate-binding residues include R95, R105, R133, and D223. Mg(2+) contacts are provided by D223, D247, and D251. NAD(+) is bound at residue G281–N293.

It belongs to the isocitrate and isopropylmalate dehydrogenases family. LeuB type 1 subfamily. As to quaternary structure, homodimer. It depends on Mg(2+) as a cofactor. Mn(2+) is required as a cofactor.

It localises to the cytoplasm. It catalyses the reaction (2R,3S)-3-isopropylmalate + NAD(+) = 4-methyl-2-oxopentanoate + CO2 + NADH. Its pathway is amino-acid biosynthesis; L-leucine biosynthesis; L-leucine from 3-methyl-2-oxobutanoate: step 3/4. Catalyzes the oxidation of 3-carboxy-2-hydroxy-4-methylpentanoate (3-isopropylmalate) to 3-carboxy-4-methyl-2-oxopentanoate. The product decarboxylates to 4-methyl-2 oxopentanoate. The sequence is that of 3-isopropylmalate dehydrogenase from Neisseria gonorrhoeae (strain ATCC 700825 / FA 1090).